The chain runs to 143 residues: 1,4-dihydroxy-2-naphthoyl-CoA hydrolase (143 aa).

Residue Asp-14 is part of the active site.

It belongs to the 4-hydroxybenzoyl-CoA thioesterase family. DHNA-CoA hydrolase subfamily.

It catalyses the reaction 1,4-dihydroxy-2-naphthoyl-CoA + H2O = 1,4-dihydroxy-2-naphthoate + CoA + H(+). It participates in cofactor biosynthesis; phylloquinone biosynthesis. Its pathway is quinol/quinone metabolism; 1,4-dihydroxy-2-naphthoate biosynthesis; 1,4-dihydroxy-2-naphthoate from chorismate: step 7/7. Functionally, catalyzes the hydrolysis of 1,4-dihydroxy-2-naphthoyl-CoA (DHNA-CoA) to 1,4-dihydroxy-2-naphthoate (DHNA), a reaction involved in phylloquinone (vitamin K1) biosynthesis. This is 1,4-dihydroxy-2-naphthoyl-CoA hydrolase from Gloeothece citriformis (strain PCC 7424) (Cyanothece sp. (strain PCC 7424)).